A 171-amino-acid chain; its full sequence is AP-3 complex subunit sigma (171 aa).

The protein belongs to the adaptor complexes small subunit family. Adaptor protein complex 3 (AP-3) is a heterotetramer composed of two large adaptins (delta-type subunit and beta-type subunit), a medium adaptin (mu-type subunit) and a small adaptin (sigma-type subunit).

The protein localises to the endosome membrane. Part of the AP-3 complex, an adaptor-related complex which is essential for the compartmentalization of the endocytic pathway. The protein is AP-3 complex subunit sigma (ap3s1) of Dictyostelium discoideum (Social amoeba).